The sequence spans 448 residues: MGRDLRDNETWWYNPSIVVHPHWREFDQVPDAVYYSLGIFIGICGIIGCGGNGIVIYLFTKTKSLQTPANMFIINLAFSDFTFSLVNGFPLMTISCFLKKWIFGFAACKVYGFIGGIFGFMSIMTMAMISIDRYNVIGRPMAASKKMSHRRAFIMIIFVWLWSVLWAIGPIFGWGAYTLEGVLCNCSFDYISRDSTTRSNILCMFILGFFGPILIIFFCYFNIVMSVSNHEKEMAAMAKRLNAKELRKAQAGANAEMRLAKISIVIVSQFLLSWSPYAVVALLAQFGPLEWVTPYAAQLPVMFAKASAIHNPMIYSVSHPKFREAISQTFPWVLTCCQFDDKETEDDKDAETEIPAGESSDAAPSADAAQMKEMMAMMQKMQQQQAAYPPQGYAPPPQGYPPQGYPPQGYPPQGYPPQGYPPPPQGAPPQGAPPAAPPQGVDNQAYQA.

Residues 2–33 (GRDLRDNETWWYNPSIVVHPHWREFDQVPDAV) lie on the Extracellular side of the membrane. Asn8 is a glycosylation site (N-linked (GlcNAc...) asparagine). A helical membrane pass occupies residues 34–58 (YYSLGIFIGICGIIGCGGNGIVIYL). Over 59–70 (FTKTKSLQTPAN) the chain is Cytoplasmic. Residues 71–97 (MFIINLAFSDFTFSLVNGFPLMTISCF) traverse the membrane as a helical segment. At 98 to 109 (LKKWIFGFAACK) the chain is on the extracellular side. A disulfide bond links Cys108 and Cys186. A helical membrane pass occupies residues 110–131 (VYGFIGGIFGFMSIMTMAMISI). Residues 132-151 (DRYNVIGRPMAASKKMSHRR) lie on the Cytoplasmic side of the membrane. The chain crosses the membrane as a helical span at residues 152–172 (AFIMIIFVWLWSVLWAIGPIF). Residues 173–199 (GWGAYTLEGVLCNCSFDYISRDSTTRS) are Extracellular-facing. Residues 200 to 224 (NILCMFILGFFGPILIIFFCYFNIV) form a helical membrane-spanning segment. Topologically, residues 225 to 261 (MSVSNHEKEMAAMAKRLNAKELRKAQAGANAEMRLAK) are cytoplasmic. Residues 262-283 (ISIVIVSQFLLSWSPYAVVALL) form a helical membrane-spanning segment. Residues 284–293 (AQFGPLEWVT) are Extracellular-facing. A helical membrane pass occupies residues 294-315 (PYAAQLPVMFAKASAIHNPMIY). Position 305 is an N6-(retinylidene)lysine (Lys305). At 316 to 448 (SVSHPKFREA…QGVDNQAYQA (133 aa)) the chain is on the cytoplasmic side. Residues Cys336 and Cys337 are each lipidated (S-palmitoyl cysteine). Positions 343 to 352 (ETEDDKDAET) are enriched in acidic residues. Positions 343-448 (ETEDDKDAET…QGVDNQAYQA (106 aa)) are disordered. Positions 359 to 391 (SSDAAPSADAAQMKEMMAMMQKMQQQQAAYPPQ) are enriched in low complexity. The span at 392–437 (GYAPPPQGYPPQGYPPQGYPPQGYPPQGYPPPPQGAPPQGAPPAAP) shows a compositional bias: pro residues.

This sequence belongs to the G-protein coupled receptor 1 family. Opsin subfamily. In terms of processing, contains one covalently linked retinal chromophore. Upon light absorption, the covalently bound 11-cis-retinal is converted to all-trans-retinal. After hydrolysis of the Schiff base and release of the covalently bound all-trans-retinal, active rhodopsin is regenerated by binding of a fresh molecule of 11-cis-retinal. Retina, rhabdomere membrane of photoreceptor cells (at protein level).

It is found in the cell projection. It localises to the rhabdomere membrane. In terms of biological role, photoreceptor required for image-forming vision at low light intensity. Light-induced isomerization of 11-cis to all-trans retinal triggers a conformational change that activates signaling via G-proteins. Signaling mediates the activation of phospholipase C. Subsequent receptor phosphorylation mediates displacement of the bound G-protein alpha subunit by arrestin and terminates signaling. This is Rhodopsin (RHO) from Todarodes pacificus (Japanese flying squid).